Consider the following 189-residue polypeptide: GTP cyclohydrolase 1 (189 aa).

Residues Cys-79, His-82, and Cys-150 each contribute to the Zn(2+) site.

The protein belongs to the GTP cyclohydrolase I family. As to quaternary structure, homomer.

The enzyme catalyses GTP + H2O = 7,8-dihydroneopterin 3'-triphosphate + formate + H(+). It participates in cofactor biosynthesis; 7,8-dihydroneopterin triphosphate biosynthesis; 7,8-dihydroneopterin triphosphate from GTP: step 1/1. This Rickettsia africae (strain ESF-5) protein is GTP cyclohydrolase 1.